A 174-amino-acid chain; its full sequence is Probasin (174 aa).

A signal peptide spans 1–18; the sequence is MMRVIILLLTLHVLGVSS. Residues cysteine 77 and cysteine 168 are joined by a disulfide bond.

This sequence belongs to the calycin superfamily. Lipocalin family.

The protein resides in the secreted. This chain is Probasin (Pbsn), found in Mus musculus (Mouse).